We begin with the raw amino-acid sequence, 379 residues long: Succinate--CoA ligase [ADP-forming] subunit beta (379 aa).

The region spanning 9–237 (RDILARYGIP…SSDEPEAEQR (229 aa)) is the ATP-grasp domain. ATP-binding positions include Lys45, 52–54 (GRG), Ile94, and Glu99. Mg(2+) contacts are provided by Asn192 and Asp206. Residues Asn257 and 314–316 (GIT) each bind substrate.

It belongs to the succinate/malate CoA ligase beta subunit family. In terms of assembly, heterotetramer of two alpha and two beta subunits. Mg(2+) is required as a cofactor.

It carries out the reaction succinate + ATP + CoA = succinyl-CoA + ADP + phosphate. The enzyme catalyses GTP + succinate + CoA = succinyl-CoA + GDP + phosphate. It functions in the pathway carbohydrate metabolism; tricarboxylic acid cycle; succinate from succinyl-CoA (ligase route): step 1/1. Its function is as follows. Succinyl-CoA synthetase functions in the citric acid cycle (TCA), coupling the hydrolysis of succinyl-CoA to the synthesis of either ATP or GTP and thus represents the only step of substrate-level phosphorylation in the TCA. The beta subunit provides nucleotide specificity of the enzyme and binds the substrate succinate, while the binding sites for coenzyme A and phosphate are found in the alpha subunit. The protein is Succinate--CoA ligase [ADP-forming] subunit beta of Roseiflexus sp. (strain RS-1).